The sequence spans 673 residues: Annexin A6 (673 aa).

Position 2 is an N-acetylalanine (alanine 2). Residue serine 13 is modified to Phosphoserine. 8 Annexin repeats span residues 20–91, 92–163, 175–247, 251–322, 363–434, 435–506, 521–595, and 599–670; these read FDAN…NLMR, PLAY…VLLQ, DLVQ…AVVK, STPE…KLCG, FNPD…GLMM, PPAH…SLAT, EDAQ…AIVQ, and NKPL…ALCG. Position 30 is a phosphotyrosine (tyrosine 30). N6-acetyllysine occurs at positions 63, 68, 75, and 81. Tyrosine 201 carries the phosphotyrosine modification. Residues lysine 306, lysine 370, and lysine 418 each carry the N6-acetyllysine modification. Serine 422 carries the post-translational modification Phosphoserine. Lysine 483 carries the post-translational modification N6-acetyllysine. At serine 537 the chain carries Phosphoserine. Lysine 620 is subject to N6-acetyllysine.

Belongs to the annexin family.

It localises to the cytoplasm. The protein resides in the melanosome. Functionally, may associate with CD21. May regulate the release of Ca(2+) from intracellular stores. The polypeptide is Annexin A6 (Anxa6) (Rattus norvegicus (Rat)).